Consider the following 394-residue polypeptide: Chorismate synthase (394 aa).

Arginine 40 and arginine 46 together coordinate NADP(+). FMN is bound by residues 135–137, 255–256, glycine 302, 317–321, and arginine 343; these read RAS, QA, and KPISS.

Belongs to the chorismate synthase family. Homotetramer. FMNH2 is required as a cofactor.

The enzyme catalyses 5-O-(1-carboxyvinyl)-3-phosphoshikimate = chorismate + phosphate. Its pathway is metabolic intermediate biosynthesis; chorismate biosynthesis; chorismate from D-erythrose 4-phosphate and phosphoenolpyruvate: step 7/7. Its function is as follows. Catalyzes the anti-1,4-elimination of the C-3 phosphate and the C-6 proR hydrogen from 5-enolpyruvylshikimate-3-phosphate (EPSP) to yield chorismate, which is the branch point compound that serves as the starting substrate for the three terminal pathways of aromatic amino acid biosynthesis. This reaction introduces a second double bond into the aromatic ring system. The chain is Chorismate synthase from Parafrankia sp. (strain EAN1pec).